We begin with the raw amino-acid sequence, 363 residues long: Flagellar P-ring protein (363 aa).

A signal peptide spans 1 to 21 (MKTVINIFILFTFLASLSANA).

Belongs to the FlgI family. As to quaternary structure, the basal body constitutes a major portion of the flagellar organelle and consists of four rings (L,P,S, and M) mounted on a central rod.

It localises to the periplasm. The protein resides in the bacterial flagellum basal body. Functionally, assembles around the rod to form the L-ring and probably protects the motor/basal body from shearing forces during rotation. This Colwellia psychrerythraea (strain 34H / ATCC BAA-681) (Vibrio psychroerythus) protein is Flagellar P-ring protein.